We begin with the raw amino-acid sequence, 783 residues long: Cyclin-dependent kinase 11A (783 aa).

The segment covering 18–58 has biased composition (basic and acidic residues); it reads QEKKRRKEQEEKAEIKRLKNSDDRDSKRDSLEEGELRDHCM. The tract at residues 18 to 396 is disordered; that stretch reads QEKKRRKEQE…SALTEGDYVP (379 aa). Phosphoserine occurs at positions 47 and 72. Positions 95–125 are enriched in basic residues; it reads EKVHHRKDEKRKEKWKHARVKEREHERRKRH. 3 stretches are compositionally biased toward basic and acidic residues: residues 126–215, 226–241, and 252–264; these read REEQ…DKVK, PPRE…KPGE, and QLKE…RDLL. At S271 the chain carries Phosphoserine. The segment covering 279 to 290 has biased composition (low complexity); that stretch reads SAESSSAESGSG. Acidic residues-rich tracts occupy residues 291–352 and 371–380; these read SEEE…EERE and ESEEAEEEVG. Residues 427–647 form the Protein kinase domain; the sequence is QCLNRIEEGT…VFKELGTPSE (221 aa). ATP-binding positions include 432–440 and K455; that span reads IEEGTYGVV. Position 470 is a phosphoserine; by CDK7 (S470). T476 is modified (phosphothreonine; by CDK7). D550 serves as the catalytic Proton acceptor. S577 carries the post-translational modification Phosphoserine. A Phosphotyrosine modification is found at Y582. Phosphothreonine is present on residues T583 and T739. The tract at residues 721–783 is disordered; sequence SMFPTWPAKS…AAGPGFSLKF (63 aa). S740 carries the post-translational modification Phosphoserine.

The protein belongs to the protein kinase superfamily. CMGC Ser/Thr protein kinase family. CDC2/CDKX subfamily. In terms of assembly, the cleaved p110 isoform, p110C, binds to the serine/threonine kinase PAK1. The p58 isoform but not the p110 isoform or p110C interacts with CCND3. The p110 isoforms are found in large molecular weight complexes containing CCNL1 and SFRS7. Requires Mg(2+) as cofactor. Post-translationally, during apoptosis, induced by Fas or tumor necrosis factor, specific CKD11 p110 isoforms are cleaved by caspases to produce a protein (p110C) that contains the C-terminal kinase domain of the CDK11 proteins. In terms of tissue distribution, expressed ubiquitously. Some evidence of isoform-specific tissue distribution.

It is found in the cytoplasm. It localises to the nucleus. The catalysed reaction is L-seryl-[protein] + ATP = O-phospho-L-seryl-[protein] + ADP + H(+). It carries out the reaction L-threonyl-[protein] + ATP = O-phospho-L-threonyl-[protein] + ADP + H(+). With respect to regulation, phosphorylation at Thr-436 or Tyr-437 inactivates the enzyme, while phosphorylation at Thr-583 activates it. Appears to play multiple roles in cell cycle progression, cytokinesis and apoptosis. The p110 isoforms have been suggested to be involved in pre-mRNA splicing, potentially by phosphorylating the splicing protein SFRS7. The p58 isoform may act as a negative regulator of normal cell cycle progression. The chain is Cyclin-dependent kinase 11A (CDK11A) from Homo sapiens (Human).